The chain runs to 205 residues: ATP phosphoribosyltransferase (205 aa).

It belongs to the ATP phosphoribosyltransferase family. Short subfamily. As to quaternary structure, heteromultimer composed of HisG and HisZ subunits.

The protein localises to the cytoplasm. The enzyme catalyses 1-(5-phospho-beta-D-ribosyl)-ATP + diphosphate = 5-phospho-alpha-D-ribose 1-diphosphate + ATP. Its pathway is amino-acid biosynthesis; L-histidine biosynthesis; L-histidine from 5-phospho-alpha-D-ribose 1-diphosphate: step 1/9. Catalyzes the condensation of ATP and 5-phosphoribose 1-diphosphate to form N'-(5'-phosphoribosyl)-ATP (PR-ATP). Has a crucial role in the pathway because the rate of histidine biosynthesis seems to be controlled primarily by regulation of HisG enzymatic activity. The polypeptide is ATP phosphoribosyltransferase (Helicobacter hepaticus (strain ATCC 51449 / 3B1)).